The chain runs to 200 residues: Casparian strip membrane protein 1 (200 aa).

The Cytoplasmic portion of the chain corresponds to Met-1–Gly-38. A helical transmembrane segment spans residues Leu-39 to Ala-59. Topologically, residues Thr-60–Thr-86 are extracellular. The chain crosses the membrane as a helical span at residues Phe-87–Phe-107. Residues Ser-108 to Arg-121 are Cytoplasmic-facing. The chain crosses the membrane as a helical span at residues Leu-122–Ala-142. Residues Ala-143–Glu-171 are Extracellular-facing. The chain crosses the membrane as a helical span at residues Val-172–Leu-192. Residues Ser-193 to His-200 are Cytoplasmic-facing.

Belongs to the Casparian strip membrane proteins (CASP) family. In terms of assembly, homodimer and heterodimers.

The protein resides in the cell membrane. Its function is as follows. Regulates membrane-cell wall junctions and localized cell wall deposition. Required for establishment of the Casparian strip membrane domain (CSD) and the subsequent formation of Casparian strips, a cell wall modification of the root endodermis that determines an apoplastic barrier between the intraorganismal apoplasm and the extraorganismal apoplasm and prevents lateral diffusion. The polypeptide is Casparian strip membrane protein 1 (Theobroma cacao (Cacao)).